A 441-amino-acid polypeptide reads, in one-letter code: ATP-dependent protease ATPase subunit HslU (441 aa).

ATP contacts are provided by residues Val-18, 60–65, Asp-254, Glu-319, and Arg-391; that span reads GVGKTE.

It belongs to the ClpX chaperone family. HslU subfamily. In terms of assembly, a double ring-shaped homohexamer of HslV is capped on each side by a ring-shaped HslU homohexamer. The assembly of the HslU/HslV complex is dependent on binding of ATP.

The protein resides in the cytoplasm. Functionally, ATPase subunit of a proteasome-like degradation complex; this subunit has chaperone activity. The binding of ATP and its subsequent hydrolysis by HslU are essential for unfolding of protein substrates subsequently hydrolyzed by HslV. HslU recognizes the N-terminal part of its protein substrates and unfolds these before they are guided to HslV for hydrolysis. The protein is ATP-dependent protease ATPase subunit HslU of Verminephrobacter eiseniae (strain EF01-2).